A 485-amino-acid polypeptide reads, in one-letter code: Glutamyl-tRNA(Gln) amidotransferase subunit A (485 aa).

Active-site charge relay system residues include K78 and S153. S177 (acyl-ester intermediate) is an active-site residue.

This sequence belongs to the amidase family. GatA subfamily. In terms of assembly, heterotrimer of A, B and C subunits.

It carries out the reaction L-glutamyl-tRNA(Gln) + L-glutamine + ATP + H2O = L-glutaminyl-tRNA(Gln) + L-glutamate + ADP + phosphate + H(+). Allows the formation of correctly charged Gln-tRNA(Gln) through the transamidation of misacylated Glu-tRNA(Gln) in organisms which lack glutaminyl-tRNA synthetase. The reaction takes place in the presence of glutamine and ATP through an activated gamma-phospho-Glu-tRNA(Gln). The polypeptide is Glutamyl-tRNA(Gln) amidotransferase subunit A (Syntrophus aciditrophicus (strain SB)).